The following is a 166-amino-acid chain: Probable dual specificity protein phosphatase H1 homolog (166 aa).

The 142-residue stretch at 25–166 (DITKITDYVY…FLNQIIDKYI (142 aa)) folds into the Tyrosine-protein phosphatase domain. The Phosphocysteine intermediate role is filled by Cys-108.

Belongs to the protein-tyrosine phosphatase family. Non-receptor class dual specificity subfamily. As to quaternary structure, homodimer.

It localises to the virion. The protein resides in the host cytoplasm. The enzyme catalyses O-phospho-L-tyrosyl-[protein] + H2O = L-tyrosyl-[protein] + phosphate. The catalysed reaction is O-phospho-L-seryl-[protein] + H2O = L-seryl-[protein] + phosphate. In terms of biological role, serine/Tyrosine phosphatase which down-regulates cellular antiviral response by dephosphorylating activated STAT1 and blocking interferon (IFN)-stimulated innate immune responses. The chain is Probable dual specificity protein phosphatase H1 homolog from Vertebrata (FPV).